The following is a 454-amino-acid chain: NADP-specific glutamate dehydrogenase (454 aa).

N-acetylserine is present on S2. Residue K114 is part of the active site.

This sequence belongs to the Glu/Leu/Phe/Val dehydrogenases family. In terms of assembly, homohexamer.

The enzyme catalyses L-glutamate + NADP(+) + H2O = 2-oxoglutarate + NH4(+) + NADPH + H(+). In Neurospora crassa (strain ATCC 24698 / 74-OR23-1A / CBS 708.71 / DSM 1257 / FGSC 987), this protein is NADP-specific glutamate dehydrogenase (gdh).